A 262-amino-acid chain; its full sequence is 3-deoxy-manno-octulosonate cytidylyltransferase (262 aa).

It belongs to the KdsB family.

Its subcellular location is the cytoplasm. It carries out the reaction 3-deoxy-alpha-D-manno-oct-2-ulosonate + CTP = CMP-3-deoxy-beta-D-manno-octulosonate + diphosphate. It functions in the pathway nucleotide-sugar biosynthesis; CMP-3-deoxy-D-manno-octulosonate biosynthesis; CMP-3-deoxy-D-manno-octulosonate from 3-deoxy-D-manno-octulosonate and CTP: step 1/1. It participates in bacterial outer membrane biogenesis; lipopolysaccharide biosynthesis. Activates KDO (a required 8-carbon sugar) for incorporation into bacterial lipopolysaccharide in Gram-negative bacteria. The protein is 3-deoxy-manno-octulosonate cytidylyltransferase of Acidovorax sp. (strain JS42).